Here is a 354-residue protein sequence, read N- to C-terminus: WASH complex subunit 3 (354 aa).

The segment at 76–354 (SSANVPVHNT…DDDDDDDESW (279 aa)) is disordered. Residues 107 to 143 (IPPPPPPPPPPMTGVPPPPPPPPPPPISKSNIPPPPA) are compositionally biased toward pro residues. Residues 150 to 159 (ESDDDDEDNN) show a composition bias toward acidic residues. Over residues 213 to 244 (PQPPQPQPQSPSPQPPPPPTTTSSIPVPPPPF) the composition is skewed to pro residues. Acidic residues predominate over residues 251–260 (SDDDDDDDEG). A compositionally biased stretch (low complexity) spans 277–290 (NNNSNSNSYSNNNN). 2 stretches are compositionally biased toward acidic residues: residues 293–307 (DDDD…DDDN) and 342–354 (DADD…DESW).

Belongs to the CCDC53 family. Probable component of the WASH complex.

This Dictyostelium discoideum (Social amoeba) protein is WASH complex subunit 3.